The following is a 67-amino-acid chain: ATP synthase F(0) complex subunit 8 (67 aa).

Residues 8–24 form a helical membrane-spanning segment; it reads TWSITIMSMIMTLFIVF. N6-acetyllysine; alternate is present on Lys-54. Residue Lys-54 is modified to N6-succinyllysine; alternate. Lys-57 is subject to N6-acetyllysine.

Belongs to the ATPase protein 8 family. Component of the ATP synthase complex composed at least of ATP5F1A/subunit alpha, ATP5F1B/subunit beta, ATP5MC1/subunit c (homooctomer), MT-ATP6/subunit a, MT-ATP8/subunit 8, ATP5ME/subunit e, ATP5MF/subunit f, ATP5MG/subunit g, ATP5MK/subunit k, ATP5MJ/subunit j, ATP5F1C/subunit gamma, ATP5F1D/subunit delta, ATP5F1E/subunit epsilon, ATP5PF/subunit F6, ATP5PB/subunit b, ATP5PD/subunit d, ATP5PO/subunit OSCP. ATP synthase complex consists of a soluble F(1) head domain (subunits alpha(3) and beta(3)) - the catalytic core - and a membrane F(0) domain - the membrane proton channel (subunits c, a, 8, e, f, g, k and j). These two domains are linked by a central stalk (subunits gamma, delta, and epsilon) rotating inside the F1 region and a stationary peripheral stalk (subunits F6, b, d, and OSCP). Interacts with PRICKLE3.

Its subcellular location is the mitochondrion membrane. Its function is as follows. Subunit 8, of the mitochondrial membrane ATP synthase complex (F(1)F(0) ATP synthase or Complex V) that produces ATP from ADP in the presence of a proton gradient across the membrane which is generated by electron transport complexes of the respiratory chain. ATP synthase complex consist of a soluble F(1) head domain - the catalytic core - and a membrane F(1) domain - the membrane proton channel. These two domains are linked by a central stalk rotating inside the F(1) region and a stationary peripheral stalk. During catalysis, ATP synthesis in the catalytic domain of F(1) is coupled via a rotary mechanism of the central stalk subunits to proton translocation. In vivo, can only synthesize ATP although its ATP hydrolase activity can be activated artificially in vitro. Part of the complex F(0) domain. The protein is ATP synthase F(0) complex subunit 8 of Felis catus (Cat).